Reading from the N-terminus, the 242-residue chain is Small ribosomal subunit protein uS2 (242 aa).

It belongs to the universal ribosomal protein uS2 family.

The sequence is that of Small ribosomal subunit protein uS2 from Vibrio parahaemolyticus serotype O3:K6 (strain RIMD 2210633).